Consider the following 464-residue polypeptide: NADH dehydrogenase [ubiquinone] flavoprotein 1, mitochondrial (464 aa).

The N-terminal 20 residues, 1–20 (MLAARHFLGGLVPVRVSVRF), are a transit peptide targeting the mitochondrion. At Lys81 the chain carries N6-acetyllysine; alternate. N6-succinyllysine; alternate is present on Lys81. 87–96 (GRGGAGFPTG) is a binding site for NADH. Lys104 bears the N6-acetyllysine mark. 199–247 (RGAGAYICGEETALIESIEGKQGKPRLKPPFPADVGVFGCPTTVANVET) contributes to the FMN binding site. At Arg257 the chain carries Omega-N-methylarginine. The residue at position 375 (Lys375) is an N6-acetyllysine. Positions 379, 382, 385, and 425 each coordinate [4Fe-4S] cluster.

It belongs to the complex I 51 kDa subunit family. Core subunit of respiratory chain NADH dehydrogenase (Complex I) which is composed of 45 different subunits. This is a component of the flavoprotein-sulfur (FP) fragment of the enzyme. Interacts with RAB5IF. FMN serves as cofactor. The cofactor is [4Fe-4S] cluster.

The protein resides in the mitochondrion inner membrane. It carries out the reaction a ubiquinone + NADH + 5 H(+)(in) = a ubiquinol + NAD(+) + 4 H(+)(out). Core subunit of the mitochondrial membrane respiratory chain NADH dehydrogenase (Complex I) which catalyzes electron transfer from NADH through the respiratory chain, using ubiquinone as an electron acceptor. Part of the peripheral arm of the enzyme, where the electrons from NADH are accepted by flavin mononucleotide (FMN) and then passed along a chain of iron-sulfur clusters by electron tunnelling to the final acceptor ubiquinone. Contains FMN, which is the initial electron acceptor as well as one iron-sulfur cluster. The sequence is that of NADH dehydrogenase [ubiquinone] flavoprotein 1, mitochondrial from Mus musculus (Mouse).